Consider the following 688-residue polypeptide: Sodium channel and clathrin linker 1 (688 aa).

Ala-2 is modified (N-acetylalanine). 2 coiled-coil regions span residues 59-108 (LIAE…AVEK) and 152-673 (QTAS…SVIT). Ser-681 is modified (phosphoserine).

Interacts with SCN10A and clathrin. Identified in a complex containing SCN10A, clathrin and SCLT1.

It is found in the cytoplasm. Its subcellular location is the cytoskeleton. The protein localises to the microtubule organizing center. It localises to the centrosome. The protein resides in the centriole. Functionally, adapter protein that links SCN10A to clathrin. Regulates SCN10A channel activity, possibly by promoting channel internalization. This Mus musculus (Mouse) protein is Sodium channel and clathrin linker 1 (Sclt1).